We begin with the raw amino-acid sequence, 400 residues long: MSLDKTQIISQILNHSPSHIIIGYSGGVDSSVLLDITKDLDIPTIAIYINHNIHPDALKWQLHCQTICNNANIDFIAHSLDQAPKGESFEAWASKQRMDFFIEIMSQYSSPILLLGHHLDDQAETFLIQAIRGSGLAGLASMPYYKQLNHGAVLRPLLDYTKKDIQDYASQNKINHIYDDSNENIKYRRNLIRNQIMPILEQINPNISRTLSRSAKICAESSNILQKLLNEKLQKISQNNSLIISELLSLDKDIQKSLIHHWFKETTNQSLKNKQTEEIHKALNNDIHTGWQFDINQQFQISVEYNQLIIKNNNQVDLILDNKDIIEWLKERFNKDFDTRELIVRQRQASDKCRYQGRDKANKLKVLFQELKIPTSERSKAKVILLNDKIIAVYPFFICD.

Residue 25 to 30 (SGGVDS) coordinates ATP.

This sequence belongs to the tRNA(Ile)-lysidine synthase family.

The protein localises to the cytoplasm. The enzyme catalyses cytidine(34) in tRNA(Ile2) + L-lysine + ATP = lysidine(34) in tRNA(Ile2) + AMP + diphosphate + H(+). Ligates lysine onto the cytidine present at position 34 of the AUA codon-specific tRNA(Ile) that contains the anticodon CAU, in an ATP-dependent manner. Cytidine is converted to lysidine, thus changing the amino acid specificity of the tRNA from methionine to isoleucine. The polypeptide is tRNA(Ile)-lysidine synthase (Francisella philomiragia subsp. philomiragia (strain ATCC 25017 / CCUG 19701 / FSC 153 / O#319-036)).